A 495-amino-acid polypeptide reads, in one-letter code: MRRSMPLAQLLPDIPQARDVVISGLVMDSREVQPGDAFVAVAGFGAHGLCFIEDACARGAVAILFEPPAPQGVSVPDGAIAVHGLRARLGAMADRFHGHPSQAMTMVGVTGTNGKTSTVQLLAQAWHCLGVRSATCGTLGVGLYDQVVPTGFTTPLVLQLHQCLAQLRDEGAQAVAMEVSSHALDQGRVDGVHYDVVVFTNLTRDHLDYHGDMEHYGAAKARLFAHQDVQAAVINVDDPFGLRLLHGLAKGMRRVGVSVCGHTDADVMAQHLSLNLQGIGFDLVIGADHASVRSPLMGRFNVDNLLAVAGVLYALNYALSEIAAVLSTLRPIHGRMNRLGGQDGQPVVVVDYAHTPDALGQVLSSLSSHVCGRLICVFGCGGERDRGKRSQMAVIAESNADVVFVTDDNPRGEDGDGIVADILAGFARPNVVKVQRDRSAAIAAAIGIASAEDVVLIAGKGHERYQEVAGVRHPFDDTEVARRVLAAMSAQETVR.

S29 lines the UDP-N-acetyl-alpha-D-muramoyl-L-alanyl-D-glutamate pocket. Position 111 to 117 (111 to 117 (GTNGKTS)) interacts with ATP. UDP-N-acetyl-alpha-D-muramoyl-L-alanyl-D-glutamate contacts are provided by residues 153–154 (TT), S180, Q186, and R188. At K220 the chain carries N6-carboxylysine. Meso-2,6-diaminopimelate-binding positions include R384, 408-411 (DNPR), G459, and E463. The Meso-diaminopimelate recognition motif signature appears at 408–411 (DNPR).

This sequence belongs to the MurCDEF family. MurE subfamily. Mg(2+) is required as a cofactor. In terms of processing, carboxylation is probably crucial for Mg(2+) binding and, consequently, for the gamma-phosphate positioning of ATP.

It localises to the cytoplasm. It carries out the reaction UDP-N-acetyl-alpha-D-muramoyl-L-alanyl-D-glutamate + meso-2,6-diaminopimelate + ATP = UDP-N-acetyl-alpha-D-muramoyl-L-alanyl-gamma-D-glutamyl-meso-2,6-diaminopimelate + ADP + phosphate + H(+). It participates in cell wall biogenesis; peptidoglycan biosynthesis. In terms of biological role, catalyzes the addition of meso-diaminopimelic acid to the nucleotide precursor UDP-N-acetylmuramoyl-L-alanyl-D-glutamate (UMAG) in the biosynthesis of bacterial cell-wall peptidoglycan. The protein is UDP-N-acetylmuramoyl-L-alanyl-D-glutamate--2,6-diaminopimelate ligase of Xylella fastidiosa (strain 9a5c).